The chain runs to 1486 residues: Homeobox protein cut-like 2 (1486 aa).

The interval 114-167 (DRLQPPSFDPSGQPRRDLHTSWKRNPELLSPKEQREGTSPAGPTLTEGSRLPGI) is disordered. A compositionally biased stretch (basic and acidic residues) spans 127–149 (PRRDLHTSWKRNPELLSPKEQRE). Phosphoserine is present on serine 143. Residues 195–374 (TLAARLGEAE…IKTELSILKA (180 aa)) are a coiled coil. Disordered stretches follow at residues 415-481 (LLAS…LSPF), 517-549 (PTAP…PGAE), 661-690 (EIES…STSE), 716-758 (VAPR…AQAP), 800-858 (YASV…EGAT), and 964-1032 (GQAV…SGSQ). The segment covering 419–428 (PEEDPSEDDS) has biased composition (acidic residues). Over residues 443–460 (QQLPPPPGPEDPLSPSPG) the composition is skewed to pro residues. Low complexity predominate over residues 461-470 (QPLLGPSLGP). The span at 517-532 (PTAPATPAPGPEPLGG) shows a compositional bias: pro residues. A DNA-binding region (CUT 1) is located at residues 544–631 (AGPGAEEEQL…VLALRTIQVR (88 aa)). A compositionally biased stretch (polar residues) spans 680–690 (ANGTTPASTSE). Residues 690 to 717 (EDAIKSILEQARREMQAQQQALLEMEVA) adopt a coiled-coil conformation. The segment covering 802–816 (SVSPSLSSSSSSGYS) has biased composition (low complexity). Acidic residues predominate over residues 834-844 (PEDEAAAGAED). Basic and acidic residues predominate over residues 845–854 (EPPRTGELKA). A DNA-binding region (CUT 2) is located at residues 887–974 (QYELYMYREV…QAVGQQPGAS (88 aa)). Residues 967-976 (VGQQPGASQA) show a composition bias toward polar residues. The span at 1017 to 1031 (GRSSSSLSGKMYSGS) shows a compositional bias: low complexity. Positions 1038–1125 (QEIVAMSPEL…VEKLRDMKKL (88 aa)) form a DNA-binding region, CUT 3. The homeobox DNA-binding region spans 1168-1227 (IKKPRVVLAPEEKEALRKAYQLEPYPSQQTIELLSFQLNLKTNTVINWFHNYRSRMRREM). Positions 1231–1453 (GTQDEPDLDP…ALHPSAKVNP (223 aa)) are disordered. A compositionally biased stretch (basic and acidic residues) spans 1266–1276 (EDQKPTVKELE). Positions 1283-1293 (ENSTPLTTQDK) are enriched in polar residues. Over residues 1320 to 1334 (ELDKGQGPPKEEHPD) the composition is skewed to basic and acidic residues. Over residues 1381 to 1401 (KSASESSRCSLEVSLNSPSAA) the composition is skewed to polar residues. A compositionally biased stretch (low complexity) spans 1402 to 1420 (SSPGLMMSVSPVPSSSAPI). Residues 1421 to 1431 (SPSPPGAPPAK) are compositionally biased toward pro residues.

It belongs to the CUT homeobox family.

It localises to the nucleus. In terms of biological role, transcription factor involved in the control of neuronal proliferation and differentiation in the brain. Regulates dendrite development and branching, dendritic spine formation, and synaptogenesis in cortical layers II-III. Binds to DNA in a sequence-specific manner. The protein is Homeobox protein cut-like 2 (CUX2) of Homo sapiens (Human).